Reading from the N-terminus, the 266-residue chain is Glucosamine-6-phosphate deaminase (266 aa).

The active-site Proton acceptor; for enolization step is aspartate 72. Catalysis depends on aspartate 141, which acts as the For ring-opening step. Histidine 143 functions as the Proton acceptor; for ring-opening step in the catalytic mechanism. Glutamate 148 (for ring-opening step) is an active-site residue.

Belongs to the glucosamine/galactosamine-6-phosphate isomerase family. NagB subfamily. Homohexamer.

It catalyses the reaction alpha-D-glucosamine 6-phosphate + H2O = beta-D-fructose 6-phosphate + NH4(+). Its pathway is amino-sugar metabolism; N-acetylneuraminate degradation; D-fructose 6-phosphate from N-acetylneuraminate: step 5/5. Its activity is regulated as follows. Allosterically activated by N-acetylglucosamine 6-phosphate (GlcNAc6P). In terms of biological role, catalyzes the reversible isomerization-deamination of glucosamine 6-phosphate (GlcN6P) to form fructose 6-phosphate (Fru6P) and ammonium ion. In Citrobacter koseri (strain ATCC BAA-895 / CDC 4225-83 / SGSC4696), this protein is Glucosamine-6-phosphate deaminase.